A 312-amino-acid polypeptide reads, in one-letter code: Pyridoxal kinase (312 aa).

Methionine 1 is modified (N-acetylmethionine). The pyridoxal site is built by serine 12 and threonine 47. Position 47 (threonine 47) interacts with pyridoxal 5'-phosphate. At serine 59 the chain carries Phosphoserine. ATP is bound at residue aspartate 113. Aspartate 113 contacts Na(+). Residue aspartate 118 coordinates Mg(2+). Residue threonine 148 participates in Na(+) binding. 150–153 (NQFE) contributes to the ATP binding site. Position 164 is a phosphoserine (serine 164). Threonine 186 contributes to the Na(+) binding site. An ATP-binding site is contributed by 186 to 187 (TS). Serine 213 carries the phosphoserine modification. Residues 226-228 (VDP) and threonine 233 contribute to the ATP site. 234–235 (GD) lines the pyridoxal 5'-phosphate pocket. Aspartate 235 acts as the Proton acceptor in catalysis. Serine 285 carries the post-translational modification Phosphoserine.

It belongs to the pyridoxine kinase family. Homodimer. Requires Zn(2+) as cofactor. Mg(2+) is required as a cofactor.

The protein localises to the cytoplasm. It is found in the cytosol. The enzyme catalyses pyridoxal + ATP = pyridoxal 5'-phosphate + ADP + H(+). It catalyses the reaction pyridoxamine + ATP = pyridoxamine 5'-phosphate + ADP + H(+). It carries out the reaction pyridoxine + ATP = pyridoxine 5'-phosphate + ADP + H(+). It functions in the pathway cofactor metabolism; pyridoxal 5'-phosphate salvage; pyridoxal 5'-phosphate from pyridoxal: step 1/1. It participates in cofactor metabolism; pyridoxal 5'-phosphate salvage; pyridoxine 5'-phosphate from pyridoxine: step 1/1. The protein operates within cofactor metabolism; pyridoxal 5'-phosphate salvage; pyridoxamine 5'-phosphate from pyridoxamine: step 1/1. Activity is increased in the presence of K(+)or Na(+). In terms of biological role, catalyzes the phosphorylation of the dietary vitamin B6 vitamers pyridoxal (PL), pyridoxine (PN) and pyridoxamine (PM) to form pyridoxal 5'-phosphate (PLP), pyridoxine 5'-phosphate (PNP) and pyridoxamine 5'-phosphate (PMP), respectively. PLP is the active form of vitamin B6, and acts as a cofactor for over 140 different enzymatic reactions. The chain is Pyridoxal kinase (Pdxk) from Rattus norvegicus (Rat).